The sequence spans 109 residues: Elongation factor G, chloroplastic (109 aa).

It belongs to the GTP-binding elongation factor family. EF-G/EF-2 subfamily.

Its subcellular location is the plastid. The protein resides in the chloroplast. The protein operates within protein biosynthesis; polypeptide chain elongation. Functionally, chloroplast-localized elongation factor EF-G involved in protein synthesis in plastids. Catalyzes the GTP-dependent ribosomal translocation step during translation elongation. During this step, the ribosome changes from the pre-translocational (PRE) to the post-translocational (POST) state as the newly formed A-site-bound peptidyl-tRNA and P-site-bound deacylated tRNA move to the P and E sites, respectively. Catalyzes the coordinated movement of the two tRNA molecules, the mRNA and conformational changes in the ribosome. This chain is Elongation factor G, chloroplastic, found in Arachis hypogaea (Peanut).